The chain runs to 713 residues: tRNA 5-methylaminomethyl-2-thiouridine biosynthesis bifunctional protein MnmC (713 aa).

The tract at residues 1–300 (MTAEPNKPCQ…MAAILSSATP (300 aa)) is tRNA (mnm(5)s(2)U34)-methyltransferase. An FAD-dependent cmnm(5)s(2)U34 oxidoreductase region spans residues 306 to 713 (IGGGLASAHL…LRKLLKGKAL (408 aa)).

The protein in the N-terminal section; belongs to the methyltransferase superfamily. tRNA (mnm(5)s(2)U34)-methyltransferase family. It in the C-terminal section; belongs to the DAO family. Requires FAD as cofactor.

Its subcellular location is the cytoplasm. It catalyses the reaction 5-aminomethyl-2-thiouridine(34) in tRNA + S-adenosyl-L-methionine = 5-methylaminomethyl-2-thiouridine(34) in tRNA + S-adenosyl-L-homocysteine + H(+). Its function is as follows. Catalyzes the last two steps in the biosynthesis of 5-methylaminomethyl-2-thiouridine (mnm(5)s(2)U) at the wobble position (U34) in tRNA. Catalyzes the FAD-dependent demodification of cmnm(5)s(2)U34 to nm(5)s(2)U34, followed by the transfer of a methyl group from S-adenosyl-L-methionine to nm(5)s(2)U34, to form mnm(5)s(2)U34. This is tRNA 5-methylaminomethyl-2-thiouridine biosynthesis bifunctional protein MnmC from Shewanella baltica (strain OS155 / ATCC BAA-1091).